The following is a 140-amino-acid chain: Methylglyoxal synthase (140 aa).

In terms of domain architecture, MGS-like spans 1 to 140 (MRSKPRIALI…DQAAADDAAP (140 aa)). Substrate contacts are provided by residues histidine 12, lysine 16, 38–41 (TGTT), and 58–59 (SG). Residue aspartate 64 is the Proton donor/acceptor of the active site. Histidine 91 lines the substrate pocket.

Belongs to the methylglyoxal synthase family.

It carries out the reaction dihydroxyacetone phosphate = methylglyoxal + phosphate. Catalyzes the formation of methylglyoxal from dihydroxyacetone phosphate. The polypeptide is Methylglyoxal synthase (Cupriavidus metallidurans (strain ATCC 43123 / DSM 2839 / NBRC 102507 / CH34) (Ralstonia metallidurans)).